The sequence spans 211 residues: ATP phosphoribosyltransferase (211 aa).

Belongs to the ATP phosphoribosyltransferase family. Short subfamily. In terms of assembly, heteromultimer composed of HisG and HisZ subunits.

Its subcellular location is the cytoplasm. It catalyses the reaction 1-(5-phospho-beta-D-ribosyl)-ATP + diphosphate = 5-phospho-alpha-D-ribose 1-diphosphate + ATP. Its pathway is amino-acid biosynthesis; L-histidine biosynthesis; L-histidine from 5-phospho-alpha-D-ribose 1-diphosphate: step 1/9. In terms of biological role, catalyzes the condensation of ATP and 5-phosphoribose 1-diphosphate to form N'-(5'-phosphoribosyl)-ATP (PR-ATP). Has a crucial role in the pathway because the rate of histidine biosynthesis seems to be controlled primarily by regulation of HisG enzymatic activity. This chain is ATP phosphoribosyltransferase, found in Pseudomonas putida (strain GB-1).